Reading from the N-terminus, the 93-residue chain is MPRSLKKGPFVDKDLMKKVDAAIANNDRRVLKTWSRRSTILPEMVGLTFAVHNGKKFLPVFITENMVGHKLGEFSPTRTFYGHAGDKKTKAKK.

It belongs to the universal ribosomal protein uS19 family.

Protein S19 forms a complex with S13 that binds strongly to the 16S ribosomal RNA. This Lawsonia intracellularis (strain PHE/MN1-00) protein is Small ribosomal subunit protein uS19.